The chain runs to 617 residues: Type IV inositol polyphosphate 5-phosphatase 6 (617 aa).

Disordered regions lie at residues 30–62 (EFQADDPSSAGIEVEHRSSFSAEKAPSTIKNTK) and 241–330 (DFDP…VLYS). The span at 242–253 (FDPSFRGSSSSH) shows a compositional bias: low complexity. A compositionally biased stretch (basic and acidic residues) spans 254 to 290 (RPSDYSRRPSDYSRRPSDYSRRPSDYSRRPSDSRPSD). Low complexity predominate over residues 291–311 (YSRPSDYYSRPSDYSRPSDFS). Catalytic regions lie at residues 458 to 473 (DRVIWLGDLNYRIALS) and 538 to 553 (KRRTPAWCDRILWFGE).

The protein belongs to the inositol polyphosphate 5-phosphatase family. In terms of tissue distribution, broadly expressed in emerging organs. Mostly localized in procambium of growing organs. Restricted to vascular differentiating cells of young organs.

It catalyses the reaction a 1,2-diacyl-sn-glycero-3-phospho-(1D-myo-inositol-4,5-bisphosphate) + H2O = a 1,2-diacyl-sn-glycero-3-phospho-(1D-myo-inositol 4-phosphate) + phosphate. The catalysed reaction is a 1,2-diacyl-sn-glycero-3-phospho-(1D-myo-inositol-3,4,5-trisphosphate) + H2O = a 1,2-diacyl-sn-glycero-3-phospho-(1D-myo-inositol-3,4-bisphosphate) + phosphate. In terms of biological role, has phosphatase activity toward PtdIns(4,5)P2 and PtdIns(3,4,5)P3. Required for the patterning of procambium and during the differentiation of vascular tissues. Acts before the acquisition of preprocambial identity. Seems to be also involved in the abscisic acid (ABA) signaling pathway. Acts redundantly with CVL1 for maintaining vascular continuity. Regulates phosphoinositide-dependent VAN3 localization. The chain is Type IV inositol polyphosphate 5-phosphatase 6 from Arabidopsis thaliana (Mouse-ear cress).